The following is a 328-amino-acid chain: GMP reductase (328 aa).

Catalysis depends on Cys176, which acts as the Thioimidate intermediate. An NADP(+)-binding site is contributed by 205-228; the sequence is IIADGGIRTHGDVAKSIRFGATMV.

Belongs to the IMPDH/GMPR family. GuaC type 2 subfamily.

It catalyses the reaction IMP + NH4(+) + NADP(+) = GMP + NADPH + 2 H(+). In terms of biological role, catalyzes the irreversible NADPH-dependent deamination of GMP to IMP. It functions in the conversion of nucleobase, nucleoside and nucleotide derivatives of G to A nucleotides, and in maintaining the intracellular balance of A and G nucleotides. This is GMP reductase from Bacillus thuringiensis (strain Al Hakam).